The primary structure comprises 130 residues: uncharacterized protein (130 aa).

In terms of domain architecture, HTH cro/C1-type spans 19–73 (IYSLRLAKGLSRQQLAEVIDVTHQQLQKYEKAINRISVGRLVLIAEALDRNIDYF). A DNA-binding region (H-T-H motif) is located at residues 30–49 (RQQLAEVIDVTHQQLQKYEK).

This is an uncharacterized protein from Rickettsia prowazekii (strain Madrid E).